Reading from the N-terminus, the 1012-residue chain is Formate dehydrogenase subunit alpha (1012 aa).

Residues 1 to 35 (MLIKRRAFLKLTAAGATLSAFGGLGVDLAPAKAQA) constitute a signal peptide (tat-type signal). One can recognise a 4Fe-4S Mo/W bis-MGD-type domain in the interval 45–103 (AKQTTSVCCYCSVGCGLIVHTDKKTNRAINVEGDPDHPINEGSLCAKGASTWQLAENER). [4Fe-4S] cluster-binding residues include Cys-52, Cys-55, Cys-59, and Cys-89. Sec-193 provides a ligand contact to W-bis(molybdopterin guanine dinucleotide). Sec-193 is a non-standard amino acid (selenocysteine). Residues Thr-393, Lys-395, Lys-398, Leu-428, and Asn-430 each contribute to the Ca(2+) site. Cys-852 and Cys-879 form a disulfide bridge.

Belongs to the prokaryotic molybdopterin-containing oxidoreductase family. In terms of assembly, heterodimer of alpha (FdhA) and beta (FdhB) subunits. It depends on [4Fe-4S] cluster as a cofactor. W-bis(molybdopterin guanine dinucleotide) serves as cofactor. In terms of processing, the disulfide bond is likely to be broken in the active form of this enzyme. Post-translationally, predicted to be exported by the Tat system. The position of the signal peptide cleavage has been experimentally proven.

It is found in the periplasm. It carries out the reaction formate + NAD(+) = CO2 + NADH. In terms of biological role, alpha chain of the formate dehydrogenase (FDH) catalyze the reversible two-electron oxidation of formate to carbon dioxide. FDH loses activity in the presence of air, but this activity can be restored. The alpha subunit of formate dehydrogenase forms the active site. This is Formate dehydrogenase subunit alpha from Megalodesulfovibrio gigas (Desulfovibrio gigas).